The following is a 265-amino-acid chain: AT-hook motif nuclear-localized protein 18 (265 aa).

A disordered region spans residues 1–75 (MDEVSRSHTP…AGSKNKPKAP (75 aa)). Residues 19 to 30 (HYHHQNAGRQKR) show a composition bias toward basic residues. The a.T hook DNA-binding region spans 59-71 (RRPRGRPAGSKNK). The region spanning 83–217 (ANAFRCHVME…EEEETEREID (135 aa)) is the PPC domain.

The protein localises to the nucleus. Transcription factor that specifically binds AT-rich DNA sequences related to the nuclear matrix attachment regions (MARs). Acts redundantly with AHL22, AHL27 and AHL29 in the regulation of flowering and regulation of the hypocotyl elongation. The polypeptide is AT-hook motif nuclear-localized protein 18 (Arabidopsis thaliana (Mouse-ear cress)).